Reading from the N-terminus, the 382-residue chain is Chaperone protein DnaJ 1 (382 aa).

The region spanning 4-68 is the J domain; it reads DYYGILGVDR…DKRRIVDMGG (65 aa). The segment at 134–216 adopts a CR-type zinc-finger fold; it reads GAKKDLTLDT…CAGDGRVRAR (83 aa). 8 residues coordinate Zn(2+): C147, C150, C164, C167, C190, C193, C204, and C207. CXXCXGXG motif repeat units follow at residues 147–154, 164–171, 190–197, and 204–211; these read CTKCHGSG, CGTCNGAG, CHTCDGTG, and CTECAGDG.

It belongs to the DnaJ family. As to quaternary structure, homodimer. Requires Zn(2+) as cofactor.

Its subcellular location is the cytoplasm. Participates actively in the response to hyperosmotic and heat shock by preventing the aggregation of stress-denatured proteins and by disaggregating proteins, also in an autonomous, DnaK-independent fashion. Unfolded proteins bind initially to DnaJ; upon interaction with the DnaJ-bound protein, DnaK hydrolyzes its bound ATP, resulting in the formation of a stable complex. GrpE releases ADP from DnaK; ATP binding to DnaK triggers the release of the substrate protein, thus completing the reaction cycle. Several rounds of ATP-dependent interactions between DnaJ, DnaK and GrpE are required for fully efficient folding. Also involved, together with DnaK and GrpE, in the DNA replication of plasmids through activation of initiation proteins. This chain is Chaperone protein DnaJ 1, found in Corynebacterium glutamicum (strain ATCC 13032 / DSM 20300 / JCM 1318 / BCRC 11384 / CCUG 27702 / LMG 3730 / NBRC 12168 / NCIMB 10025 / NRRL B-2784 / 534).